The primary structure comprises 226 residues: tRNA (guanine-N(7)-)-methyltransferase (226 aa).

The S-adenosyl-L-methionine site is built by D59, E84, and D111. Position 169 (D169) interacts with substrate.

It belongs to the class I-like SAM-binding methyltransferase superfamily. TrmB family.

The enzyme catalyses guanosine(46) in tRNA + S-adenosyl-L-methionine = N(7)-methylguanosine(46) in tRNA + S-adenosyl-L-homocysteine. It functions in the pathway tRNA modification; N(7)-methylguanine-tRNA biosynthesis. Catalyzes the formation of N(7)-methylguanine at position 46 (m7G46) in tRNA. The protein is tRNA (guanine-N(7)-)-methyltransferase of Chloroherpeton thalassium (strain ATCC 35110 / GB-78).